Reading from the N-terminus, the 396-residue chain is Phosphoglycerate kinase (396 aa).

Substrate is bound by residues 22–24 (DLN), R37, 60–63 (HFGR), R118, and R151. ATP is bound by residues K201, E323, and 353 to 356 (GGDT).

Belongs to the phosphoglycerate kinase family. As to quaternary structure, monomer.

Its subcellular location is the cytoplasm. It carries out the reaction (2R)-3-phosphoglycerate + ATP = (2R)-3-phospho-glyceroyl phosphate + ADP. It participates in carbohydrate degradation; glycolysis; pyruvate from D-glyceraldehyde 3-phosphate: step 2/5. This chain is Phosphoglycerate kinase, found in Xanthobacter autotrophicus (strain ATCC BAA-1158 / Py2).